The chain runs to 346 residues: Growth hormone-inducible transmembrane protein (346 aa).

The transit peptide at 1-45 (MLAARLVCLRTLPSRVFQPTFITKASPLVKNSITKNQWLVTPSRE) directs the protein to the mitochondrion. The Mitochondrial matrix portion of the chain corresponds to 46 to 83 (YATKTRIRTHRGKTGQELKEAALEPSMEKIFKIDQMGR). The helical transmembrane segment at 84 to 104 (WFVAGGAAVGLGALCYYGLGM) threads the bilayer. Topologically, residues 105-126 (SNEIGAIEKAVIWPQYVKDRIH) are mitochondrial intermembrane. The helical transmembrane segment at 127–147 (STYMYLAGSIGLTALSALAVA) threads the bilayer. The Mitochondrial matrix segment spans residues 148–160 (RTPALMNFMMTGS). Residues 161–181 (WVTIGATFAAMIGAGMLVHSI) form a helical membrane-spanning segment. Over 182–191 (SYEQSPGPKH) the chain is Mitochondrial intermembrane. Residues 192–212 (LAWMLHSGVMGAVVAPLTILG) form a helical membrane-spanning segment. Residues 213–214 (GP) are Mitochondrial matrix-facing. Residues 215 to 235 (LLLRAAWYTAGIVGGLSTVAM) form a helical membrane-spanning segment. At 236–245 (CAPSEKFLNM) the chain is on the mitochondrial intermembrane side. A helical transmembrane segment spans residues 246–266 (GAPLGVGLGLVFASSLGSMFL). Residues 267 to 272 (PPTSVA) lie on the Mitochondrial matrix side of the membrane. A helical transmembrane segment spans residues 273 to 293 (GATLYSVAMYGGLVLFSMFLL). The Mitochondrial intermembrane segment spans residues 294-346 (YDTQKVIKRAEITPMYGAQKYDPINSMLTIYMDTLNIFMRVATMLATGSNRKK).

The protein belongs to the BI1 family. In terms of assembly, interacts with LETM1 and AFG3L2. Post-translationally, undergoes AFG3L2-mediated proteolytic degradation, upon hyperpolarization of mitochondria.

The protein resides in the mitochondrion inner membrane. It carries out the reaction Ca(2+)(in) + 2 H(+)(out) = Ca(2+)(out) + 2 H(+)(in). The catalysed reaction is K(+)(in) + H(+)(out) = K(+)(out) + H(+)(in). Plays an important role in maintenance of mitochondrial morphology and in mediating either calcium or potassium/proton antiport. Mediates proton-dependent calcium efflux from mitochondrion. Also functions as an electroneutral mitochondrial proton/potassium exchanger. Required for the mitochondrial tubular network and cristae organization. Involved in apoptotic release of cytochrome c. Inhibits AFG3L2 proteolytic activity, stimulating respiration and stabilizing respiratory enzymes in actively respiring mitochondria. However, when mitochondria become hyperpolarized, GHITM loses its inhibitory activity toward AFG3L2 and the now active AFG3L2 turns first on GHITM and, if hyperpolarization persists, on other proteins of the mitochondria, leading to a broad remodeling of the mitochondrial proteome. The polypeptide is Growth hormone-inducible transmembrane protein (Ghitm) (Mus musculus (Mouse)).